Reading from the N-terminus, the 624-residue chain is Ceramide transfer protein (624 aa).

Polar residues predominate over residues 1-11; it reads MSDNQSWNSSG. The disordered stretch occupies residues 1-24; sequence MSDNQSWNSSGSEEDPETESGPPV. The PH domain occupies 23-117; sequence PVERCGVLSK…WVDAIEQHKT (95 aa). 3 positions are modified to phosphoserine: serine 126, serine 132, and serine 135. The interval 202 to 221 is disordered; the sequence is DDEDDFPTTRSDGDFLHNTN. Residues 263 to 303 adopt a coiled-coil conformation; sequence IELMVKREESWQKRHDREVEKRRRVEEAYKNVMEELKKKPR. Serine 315 is subject to Phosphoserine. Positions 321–327 match the FFAT motif; that stretch reads EFFDAVE. A Phosphotyrosine modification is found at tyrosine 372. Serine 373, serine 377, and serine 380 each carry phosphoserine. One can recognise an START domain in the interval 389–618; it reads DVHRFSSQVE…FTSYVQEKTA (230 aa). Glutamate 472, glutamine 493, asparagine 530, and tyrosine 579 together coordinate an N-acylsphing-4-enine.

In terms of assembly, interacts with VAPA and VAPB. Interaction with VAPB is less efficient than with VAPA. Interacts (via FFAT motif) with MOSPD2 (via MSP domain). Phosphorylation on Ser-132 decreases the affinity toward phosphatidylinositol 4-phosphate at Golgi membranes and reduces ceramide transfer activity. Inactivated by hyperphosphorylation of serine residues by CSNK1G2/CK1 that triggers dissociation from the Golgi complex, thus down-regulating ER-to-Golgi transport of ceramide and sphingomyelin synthesis.

Its subcellular location is the cytoplasm. The protein localises to the golgi apparatus. It localises to the endoplasmic reticulum. It carries out the reaction N-hexadecanoylsphing-4-enine(in) = N-hexadecanoylsphing-4-enine(out). In terms of biological role, shelters ceramides and diacylglycerol lipids inside its START domain and mediates the intracellular trafficking of ceramides and diacylglycerol lipids in a non-vesicular manner. The sequence is that of Ceramide transfer protein (Cert1) from Mus musculus (Mouse).